Here is a 255-residue protein sequence, read N- to C-terminus: Enkurin (255 aa).

Residues 1 to 10 (MDSPCTSESI) are compositionally biased toward polar residues. Disordered regions lie at residues 1–25 (MDSP…PQHP) and 67–96 (SKEK…DHPV). Positions 73–83 (PPKKKFNRCSP) are enriched in basic residues. The SH3-binding signature appears at 83–89 (PKKPAVP). Residues 160 to 252 (KRNEDVKKAQ…VIEKHKIIYI (93 aa)) enclose the Enkurin domain. The segment at 160 to 255 (KRNEDVKKAQ…KHKIIYIANK (96 aa)) is interaction with TRPC proteins. One can recognise an IQ domain in the interval 176–187 (IQENLKKAAMKR).

Microtubule inner protein component of sperm flagellar doublet microtubules. Binds calmodulin via its IQ domain. Interacts with TRPC1, TRPC2, TRPC5, but not TRPC3. Interacts with CFAP45. High expression in testis and vomeronasal organ and lower expression in ovary, heart, lung, and brain. Not expressed in other tissues.

Its subcellular location is the cytoplasm. The protein localises to the cytoskeleton. It localises to the cilium axoneme. The protein resides in the flagellum axoneme. Its function is as follows. Adapter that functions to localize a calcium-sensitive signal transduction machinery in sperm to a calcium-permeable ion channel. Microtubule inner protein (MIP) part of the dynein-decorated doublet microtubules (DMTs) in cilia axoneme, which is required for motile cilia beating. The sequence is that of Enkurin (Enkur) from Mus musculus (Mouse).